The chain runs to 419 residues: Gamma-glutamyl phosphate reductase (419 aa).

Belongs to the gamma-glutamyl phosphate reductase family.

It is found in the cytoplasm. The catalysed reaction is L-glutamate 5-semialdehyde + phosphate + NADP(+) = L-glutamyl 5-phosphate + NADPH + H(+). It functions in the pathway amino-acid biosynthesis; L-proline biosynthesis; L-glutamate 5-semialdehyde from L-glutamate: step 2/2. Catalyzes the NADPH-dependent reduction of L-glutamate 5-phosphate into L-glutamate 5-semialdehyde and phosphate. The product spontaneously undergoes cyclization to form 1-pyrroline-5-carboxylate. This Gloeobacter violaceus (strain ATCC 29082 / PCC 7421) protein is Gamma-glutamyl phosphate reductase.